A 67-amino-acid polypeptide reads, in one-letter code: Conotoxin LiC33 (67 aa).

A signal peptide spans 1 to 22 (MRCVPVFIILLLLSPSAPSVDA). Residues 23 to 48 (HPKTKDDVPLASFHDDAKRTLQRLWI) constitute a propeptide that is removed on maturation. Phe63 bears the Phenylalanine amide mark. Positions 65-67 (KGK) are excised as a propeptide.

Belongs to the conotoxin T superfamily. In terms of processing, contains 2 disulfide bonds that can be either 'C1-C3, C2-C4' or 'C1-C4, C2-C3', since these disulfide connectivities have been observed for conotoxins with cysteine framework V (for examples, see AC P0DQQ7 and AC P81755). Expressed by the venom duct.

The protein localises to the secreted. This is Conotoxin LiC33 from Conus lividus (Livid cone).